A 950-amino-acid polypeptide reads, in one-letter code: ABC transporter A family member 9 (950 aa).

6 helical membrane-spanning segments follow: residues 31–51, 223–243, 276–296, 308–328, 342–362, and 426–446; these read ATCL…SIEE, IISA…MFGF, WLIW…LFGM, FVLV…LAFA, VGFL…AGFP, and IWLV…DNII. The ABC transporter domain maps to 520-765; the sequence is VQIHGLAKTY…FGTGFVATVS (246 aa). 566–573 contacts ATP; it reads GPNGAGKT.

Belongs to the ABC transporter superfamily. ABCA family. CPR flippase (TC 3.A.1.211) subfamily. Highly expressed in siliques. Detected in seedlings, rosette leaves, stems and flowers.

It localises to the endoplasmic reticulum membrane. Functionally, mediates the transport of acyl-CoAs and/or free fatty acids to the endoplasmic reticulum. Has no effect on the selectivity of fatty acid incorporation into triacylglycerol or further desaturation steps. The polypeptide is ABC transporter A family member 9 (ABCA9) (Arabidopsis thaliana (Mouse-ear cress)).